Consider the following 848-residue polypeptide: Trimethylamine-N-oxide reductase 1 (848 aa).

The segment at residues 1 to 39 (MNNNDLFQASRRRFLAQLGGLTVAGMLGPSLLTPRRATA) is a signal peptide (tat-type signal). Serine 191 contacts Mo-bis(molybdopterin guanine dinucleotide).

It belongs to the prokaryotic molybdopterin-containing oxidoreductase family. Interacts with the N-terminal domain of TorC. Requires Mo-bis(molybdopterin guanine dinucleotide) as cofactor. In terms of processing, exported by the Tat system. The position of the signal peptide cleavage has been experimentally proven.

The protein resides in the periplasm. The enzyme catalyses trimethylamine + 2 Fe(III)-[cytochrome c] + H2O = trimethylamine N-oxide + 2 Fe(II)-[cytochrome c] + 3 H(+). In terms of biological role, reduces trimethylamine-N-oxide (TMAO) into trimethylamine; an anaerobic reaction coupled to energy-yielding reactions. The sequence is that of Trimethylamine-N-oxide reductase 1 (torA) from Escherichia coli (strain K12).